A 400-amino-acid polypeptide reads, in one-letter code: Phosphoglycerate kinase (400 aa).

Residues D21–N23, R36, H59–R62, R114, and R147 contribute to the substrate site. Residues K202, E329, and G355–T358 contribute to the ATP site.

The protein belongs to the phosphoglycerate kinase family. Monomer.

The protein resides in the cytoplasm. It catalyses the reaction (2R)-3-phosphoglycerate + ATP = (2R)-3-phospho-glyceroyl phosphate + ADP. Its pathway is carbohydrate degradation; glycolysis; pyruvate from D-glyceraldehyde 3-phosphate: step 2/5. The sequence is that of Phosphoglycerate kinase from Psychrobacter cryohalolentis (strain ATCC BAA-1226 / DSM 17306 / VKM B-2378 / K5).